The following is a 122-amino-acid chain: Large ribosomal subunit protein uL14 (122 aa).

Belongs to the universal ribosomal protein uL14 family. In terms of assembly, part of the 50S ribosomal subunit. Forms a cluster with proteins L3 and L19. In the 70S ribosome, L14 and L19 interact and together make contacts with the 16S rRNA in bridges B5 and B8.

Binds to 23S rRNA. Forms part of two intersubunit bridges in the 70S ribosome. This Christiangramia forsetii (strain DSM 17595 / CGMCC 1.15422 / KT0803) (Gramella forsetii) protein is Large ribosomal subunit protein uL14.